A 648-amino-acid chain; its full sequence is ATP-dependent zinc metalloprotease FtsH 4 (648 aa).

The Cytoplasmic portion of the chain corresponds to 1–6 (MKQSHK). The chain crosses the membrane as a helical span at residues 7–27 (TLLLWVLLIMMFLAIWQFLSP). Topologically, residues 28–111 (DSRPATQVAF…VFFEKEDTSP (84 aa)) are periplasmic. The chain crosses the membrane as a helical span at residues 112–132 (FWPGAIMYLLPTVFLLVMFYL). Topologically, residues 133–648 (FMRQLQAGGG…FGTPKPAPST (516 aa)) are cytoplasmic. 205–212 (GPPGTGKT) contacts ATP. Position 427 (His-427) interacts with Zn(2+). Residue Glu-428 is part of the active site. 2 residues coordinate Zn(2+): His-431 and Asp-504. A disordered region spans residues 622-648 (YSDRDRAAKEKRRAASIFGTPKPAPST).

The protein in the central section; belongs to the AAA ATPase family. In the C-terminal section; belongs to the peptidase M41 family. Homohexamer. The cofactor is Zn(2+).

It localises to the cell inner membrane. Functionally, acts as a processive, ATP-dependent zinc metallopeptidase for both cytoplasmic and membrane proteins. Plays a role in the quality control of integral membrane proteins. The chain is ATP-dependent zinc metalloprotease FtsH 4 from Sorangium cellulosum (strain So ce56) (Polyangium cellulosum (strain So ce56)).